The sequence spans 382 residues: GDP-mannose transporter 1 (382 aa).

Residues 1–40 (MADDKKTNEYTVEMDKLDHGNKNFEAPAPAVRPRGPPAAQ) lie on the Cytoplasmic side of the membrane. Residues 41-61 (LANNPILPVLAYCGSSILMTV) traverse the membrane as a helical segment. Topologically, residues 62-71 (MNKYVLSGTD) are lumenal. The helical transmembrane segment at 72–92 (FNLNFFLLCVQSIVCIVAIQT) threads the bilayer. The Cytoplasmic segment spans residues 93 to 110 (CKSSKLITYRDFNSDEAK). Residues 111–127 (KWFPITLLLIGMIYTGS) traverse the membrane as a helical segment. Residues 128 to 134 (KALQYLS) are Lumenal-facing. A helical membrane pass occupies residues 135-151 (IPVYTIFKNLTIILIAY). Over 152 to 160 (GEVLWFGGS) the chain is Cytoplasmic. The chain crosses the membrane as a helical span at residues 161 to 182 (VTGMTLFSFGLMVLSSIIAAWA). The Lumenal segment spans residues 183–200 (DIKHAVESSGDATAKVST). The chain crosses the membrane as a helical span at residues 201-221 (LNAGYIWMLINCLCTSSYVLG). The Cytoplasmic segment spans residues 222-233 (MRKRIKLTNFKD). A helical membrane pass occupies residues 234–254 (FDTMFYNNLLSIPVLLVLTFL). Residues 255 to 274 (MEDWSSANIARNFPPADRNG) lie on the Lumenal side of the membrane. A helical transmembrane segment spans residues 275-295 (ILFAMILSGLSSVFISYTSAW). Topologically, residues 296–303 (CVRVTSST) are cytoplasmic. The helical transmembrane segment at 304–324 (TYSMVGALNKLPIALSGLIFF) threads the bilayer. Over 325 to 327 (DAP) the chain is Lumenal. Residues 328–348 (VTFPSVSAIVVGFISGIVYAV) form a helical membrane-spanning segment. At 349–382 (AKIKQSAKPKTGVLPMSNPPVSASSQSMRDSLRS) the chain is on the cytoplasmic side. The disordered stretch occupies residues 358–382 (KTGVLPMSNPPVSASSQSMRDSLRS). Over residues 367 to 382 (PPVSASSQSMRDSLRS) the composition is skewed to polar residues.

The protein belongs to the TPT transporter family. SLC35D subfamily. In terms of assembly, homooligomer.

It is found in the golgi apparatus membrane. Its subcellular location is the cytoplasmic vesicle membrane. The protein localises to the endoplasmic reticulum membrane. Involved in the import of GDP-mannose from the cytoplasm into the Golgi lumen. This is GDP-mannose transporter 1 (gmt1) from Neosartorya fischeri (strain ATCC 1020 / DSM 3700 / CBS 544.65 / FGSC A1164 / JCM 1740 / NRRL 181 / WB 181) (Aspergillus fischerianus).